A 329-amino-acid chain; its full sequence is uncharacterized protein (329 aa).

10 consecutive transmembrane segments (helical) span residues 9-29 (LMGL…NVIV), 53-73 (SHSF…MALI), 105-125 (FLMF…PTGI), 126-146 (AITL…RLFN), 154-174 (WLVI…AYGG), 179-199 (LVLG…YTVF), 210-230 (VPFT…CLII), 240-260 (WLAI…GHVL), 273-293 (AAII…LAIQ), and 296-316 (LTNI…LLNY). EamA domains lie at 103–169 (CGFL…LTIP) and 191–316 (IVYA…LLNY).

Belongs to the EamA transporter family.

Its subcellular location is the cell membrane. This is an uncharacterized protein from Synechocystis sp. (strain ATCC 27184 / PCC 6803 / Kazusa).